Consider the following 301-residue polypeptide: GTP cyclohydrolase FolE2 (301 aa).

Belongs to the GTP cyclohydrolase IV family.

The enzyme catalyses GTP + H2O = 7,8-dihydroneopterin 3'-triphosphate + formate + H(+). It participates in cofactor biosynthesis; 7,8-dihydroneopterin triphosphate biosynthesis; 7,8-dihydroneopterin triphosphate from GTP: step 1/1. Its function is as follows. Converts GTP to 7,8-dihydroneopterin triphosphate. The sequence is that of GTP cyclohydrolase FolE2 from Pseudomonas syringae pv. syringae (strain B728a).